Reading from the N-terminus, the 431-residue chain is Na(+)-translocating NADH-quinone reductase subunit F (431 aa).

Residues 10–30 traverse the membrane as a helical segment; it reads IFIASTAFCALGLLLVAIILL. Residues 41-133 form the 2Fe-2S ferredoxin-type domain; sequence CKLRINNDDS…DMNLEIEERY (93 aa). 4 residues coordinate [2Fe-2S] cluster: cysteine 76, cysteine 82, cysteine 85, and cysteine 117. Residues 136–286 form the FAD-binding FR-type domain; it reads ASSWEGTVVS…SGPYGESFMK (151 aa). The interval 289–413 is catalytic; that stretch reads NRPVIFLIGG…ALHNSSILTL (125 aa).

This sequence belongs to the NqrF family. As to quaternary structure, composed of six subunits; NqrA, NqrB, NqrC, NqrD, NqrE and NqrF. [2Fe-2S] cluster serves as cofactor. The cofactor is FAD.

The protein resides in the cell inner membrane. The enzyme catalyses a ubiquinone + n Na(+)(in) + NADH + H(+) = a ubiquinol + n Na(+)(out) + NAD(+). In terms of biological role, NQR complex catalyzes the reduction of ubiquinone-1 to ubiquinol by two successive reactions, coupled with the transport of Na(+) ions from the cytoplasm to the periplasm. The first step is catalyzed by NqrF, which accepts electrons from NADH and reduces ubiquinone-1 to ubisemiquinone by a one-electron transfer pathway. This Chlamydia muridarum (strain MoPn / Nigg) protein is Na(+)-translocating NADH-quinone reductase subunit F.